The following is a 324-amino-acid chain: ATP-dependent 6-phosphofructokinase (324 aa).

Position 15 (G15) interacts with ATP. Residue 25-29 (RGVVR) coordinates ADP. ATP-binding positions include 76–77 (RF) and 106–109 (GDGS). Mg(2+) is bound at residue D107. 130–132 (TID) serves as a coordination point for substrate. The Proton acceptor role is filled by D132. R159 lines the ADP pocket. Substrate-binding positions include R167 and 174–176 (MGR). ADP is bound by residues 190–192 (GCE), K216, and 218–220 (KRH). Substrate-binding positions include E227, R248, and 254 to 257 (HIQR).

The protein belongs to the phosphofructokinase type A (PFKA) family. ATP-dependent PFK group I subfamily. Prokaryotic clade 'B1' sub-subfamily. In terms of assembly, homotetramer. Mg(2+) serves as cofactor.

Its subcellular location is the cytoplasm. It carries out the reaction beta-D-fructose 6-phosphate + ATP = beta-D-fructose 1,6-bisphosphate + ADP + H(+). Its pathway is carbohydrate degradation; glycolysis; D-glyceraldehyde 3-phosphate and glycerone phosphate from D-glucose: step 3/4. Its activity is regulated as follows. Allosterically activated by ADP and other diphosphonucleosides, and allosterically inhibited by phosphoenolpyruvate. Functionally, catalyzes the phosphorylation of D-fructose 6-phosphate to fructose 1,6-bisphosphate by ATP, the first committing step of glycolysis. This is ATP-dependent 6-phosphofructokinase from Actinobacillus pleuropneumoniae serotype 5b (strain L20).